Reading from the N-terminus, the 48-residue chain is ATP synthase protein 8 (48 aa).

A helical transmembrane segment spans residues 13 to 35 (LTYGFTFILTILFLTSYVFLPMI).

This sequence belongs to the ATPase protein 8 family. As to quaternary structure, F-type ATPases have 2 components, CF(1) - the catalytic core - and CF(0) - the membrane proton channel. In yeast, the dimeric form of ATP synthase consists of 18 polypeptides: alpha, beta, gamma, delta, epsilon, 4 (B), 5 (OSCP), 6 (A), 8, 9 (C), d, E (Tim11), f, g, h, i, j and k.

It localises to the mitochondrion membrane. Functionally, mitochondrial membrane ATP synthase (F(1)F(0) ATP synthase or Complex V) produces ATP from ADP in the presence of a proton gradient across the membrane which is generated by electron transport complexes of the respiratory chain. F-type ATPases consist of two structural domains, F(1) - containing the extramembraneous catalytic core and F(0) - containing the membrane proton channel, linked together by a central stalk and a peripheral stalk. During catalysis, ATP synthesis in the catalytic domain of F(1) is coupled via a rotary mechanism of the central stalk subunits to proton translocation. Part of the complex F(0) domain. Minor subunit located with subunit a in the membrane. In Eremothecium gossypii (strain ATCC 10895 / CBS 109.51 / FGSC 9923 / NRRL Y-1056) (Yeast), this protein is ATP synthase protein 8 (ATP8).